The following is a 63-amino-acid chain: Small ribosomal subunit protein eS30B (63 aa).

Positions 1 to 35 are disordered; that stretch reads MAKVHGSLARAGKVKSQTPKVEKTEKPKKPKGRAY. S16 is subject to Phosphoserine. A Phosphothreonine modification is found at T48.

Belongs to the eukaryotic ribosomal protein eS30 family. As to quaternary structure, component of the small ribosomal subunit (SSU). Mature yeast ribosomes consist of a small (40S) and a large (60S) subunit. The 40S small subunit contains 1 molecule of ribosomal RNA (18S rRNA) and 33 different proteins (encoded by 57 genes). The large 60S subunit contains 3 rRNA molecules (25S, 5.8S and 5S rRNA) and 46 different proteins (encoded by 81 genes).

Its subcellular location is the cytoplasm. Component of the ribosome, a large ribonucleoprotein complex responsible for the synthesis of proteins in the cell. The small ribosomal subunit (SSU) binds messenger RNAs (mRNAs) and translates the encoded message by selecting cognate aminoacyl-transfer RNA (tRNA) molecules. The large subunit (LSU) contains the ribosomal catalytic site termed the peptidyl transferase center (PTC), which catalyzes the formation of peptide bonds, thereby polymerizing the amino acids delivered by tRNAs into a polypeptide chain. The nascent polypeptides leave the ribosome through a tunnel in the LSU and interact with protein factors that function in enzymatic processing, targeting, and the membrane insertion of nascent chains at the exit of the ribosomal tunnel. The protein is Small ribosomal subunit protein eS30B of Saccharomyces cerevisiae (strain ATCC 204508 / S288c) (Baker's yeast).